Consider the following 102-residue polypeptide: NADH-quinone oxidoreductase subunit K (102 aa).

The next 3 helical transmembrane spans lie at 6 to 26, 30 to 50, and 62 to 82; these read LEHGLAVAGILFCLGLVGLMV, ILFVLMSLEVMMNASALAFIV, and VMFILVISLAAAEASIGLAIL.

Belongs to the complex I subunit 4L family. NDH-1 is composed of 13 different subunits. Subunits NuoA, H, J, K, L, M, N constitute the membrane sector of the complex.

It localises to the cell inner membrane. The catalysed reaction is a quinone + NADH + 5 H(+)(in) = a quinol + NAD(+) + 4 H(+)(out). Its function is as follows. NDH-1 shuttles electrons from NADH, via FMN and iron-sulfur (Fe-S) centers, to quinones in the respiratory chain. The immediate electron acceptor for the enzyme in this species is believed to be ubiquinone. Couples the redox reaction to proton translocation (for every two electrons transferred, four hydrogen ions are translocated across the cytoplasmic membrane), and thus conserves the redox energy in a proton gradient. This Pseudomonas putida (strain W619) protein is NADH-quinone oxidoreductase subunit K.